Consider the following 469-residue polypeptide: 3-phosphoshikimate 1-carboxyvinyltransferase (469 aa).

The tract at residues 21 to 45 (KDTILTHSDQPRPLQSRANGPLTGK) is disordered. 3 residues coordinate 3-phosphoshikimate: Lys52, Ser53, and Arg57. Lys52 is a phosphoenolpyruvate binding site. Phosphoenolpyruvate contacts are provided by Gly125 and Arg153. 3-phosphoshikimate-binding residues include Ser199, Gln201, Asp352, and Lys379. Gln201 contributes to the phosphoenolpyruvate binding site. Asp352 acts as the Proton acceptor in catalysis. Positions 383 and 426 each coordinate phosphoenolpyruvate.

Belongs to the EPSP synthase family. Monomer.

It localises to the cytoplasm. The catalysed reaction is 3-phosphoshikimate + phosphoenolpyruvate = 5-O-(1-carboxyvinyl)-3-phosphoshikimate + phosphate. The protein operates within metabolic intermediate biosynthesis; chorismate biosynthesis; chorismate from D-erythrose 4-phosphate and phosphoenolpyruvate: step 6/7. Functionally, catalyzes the transfer of the enolpyruvyl moiety of phosphoenolpyruvate (PEP) to the 5-hydroxyl of shikimate-3-phosphate (S3P) to produce enolpyruvyl shikimate-3-phosphate and inorganic phosphate. The protein is 3-phosphoshikimate 1-carboxyvinyltransferase of Bradyrhizobium diazoefficiens (strain JCM 10833 / BCRC 13528 / IAM 13628 / NBRC 14792 / USDA 110).